The following is a 272-amino-acid chain: MSSPLLPVGVFDSGVGGLTVARAIIDQLPDEDIVYVGDTGNGPYGPLSIPEIRAHALAICDDLVGRGVKILVIACNTASAACLRDARERYDVPVVEVILPAVRRAVAATRNGRIGVIGTRATIASHAYQDAFAAARDTEITAVACPRFVDFVECGVTSGRQVLGLAEGYLEPLQRSGVDTLVLGCTHYPLLAGLIQLAMGENVTLVSSAEETAKEVLRVLTERDLLRRHDAPPVNRVFEATGDPEAFIQLAARFLGPAVSGVQPARLHSRVR.

Residues D12–S13 and Y44–G45 each bind substrate. Catalysis depends on C75, which acts as the Proton donor/acceptor. N76–T77 serves as a coordination point for substrate. Residue C185 is the Proton donor/acceptor of the active site. T186–H187 lines the substrate pocket.

This sequence belongs to the aspartate/glutamate racemases family.

It carries out the reaction L-glutamate = D-glutamate. It functions in the pathway cell wall biogenesis; peptidoglycan biosynthesis. Functionally, provides the (R)-glutamate required for cell wall biosynthesis. In Mycobacterium leprae (strain TN), this protein is Glutamate racemase.